A 258-amino-acid chain; its full sequence is MEEEDHATFAVGNPSHRFDRPLIRRSSDSISNLPDEILHHILSFIPETNLVIRTSVLSKRWRHVWSKTPHLSFEWLMVSPKLINKTLASYTASKITSFHLCTSYSYEAGHVHSSIEFAMSHNVDNLSLAFSSFPPCNKFPDFFYTSSSLKRVELRSASLTPSCIVSWTSLRDLSLTRCNLSDKSFLKILSGCPILESLSLKFCESLKYLDLSKSLRLTRLEIERRSCFREPMQSMQIVAPHIHYLRLRDSEAHCTFLV.

The F-box domain maps to 27–76 (SDSISNLPDEILHHILSFIPETNLVIRTSVLSKRWRHVWSKTPHLSFEWL). LRR repeat units follow at residues 101–130 (CTSY…SLAF), 136–161 (CNKF…SLTP), 177–202 (RCNL…SLKF), and 224–249 (RRSC…RLRD).

This Arabidopsis thaliana (Mouse-ear cress) protein is F-box/LRR-repeat protein 25 (FBL25).